The following is a 358-amino-acid chain: tRNA N6-adenosine threonylcarbamoyltransferase (358 aa).

2 residues coordinate Fe cation: His-118 and His-122. Substrate-binding positions include 143–147, Asp-176, Gly-189, and Asn-298; that span reads IVSGG. Asp-326 is a Fe cation binding site.

This sequence belongs to the KAE1 / TsaD family. Requires Fe(2+) as cofactor.

Its subcellular location is the cytoplasm. The catalysed reaction is L-threonylcarbamoyladenylate + adenosine(37) in tRNA = N(6)-L-threonylcarbamoyladenosine(37) in tRNA + AMP + H(+). In terms of biological role, required for the formation of a threonylcarbamoyl group on adenosine at position 37 (t(6)A37) in tRNAs that read codons beginning with adenine. Is involved in the transfer of the threonylcarbamoyl moiety of threonylcarbamoyl-AMP (TC-AMP) to the N6 group of A37, together with TsaE and TsaB. TsaD likely plays a direct catalytic role in this reaction. This is tRNA N6-adenosine threonylcarbamoyltransferase from Rhodopirellula baltica (strain DSM 10527 / NCIMB 13988 / SH1).